The chain runs to 323 residues: NAC transcription factor 25 (323 aa).

One can recognise an NAC domain in the interval 16–177 (LPPGFRFHPT…DWVLCRIYKK (162 aa)). A DNA-binding region spans residues 114–183 (VGVKKALVFY…IYKKNSSQRP (70 aa)). Residues 201–221 (KSSANSSSTSVLDNNDNNNNN) show a composition bias toward low complexity. The interval 201 to 223 (KSSANSSSTSVLDNNDNNNNNNE) is disordered.

As to expression, expressed specifically in the tapetum.

It is found in the nucleus. In terms of biological role, transcription factor of the NAC family. May be associated with anther development and pollen production. Required for normal seed development and morphology. The chain is NAC transcription factor 25 (NAC025) from Arabidopsis thaliana (Mouse-ear cress).